The chain runs to 251 residues: Probable transcriptional regulatory protein cu0933 (251 aa).

Positions 56-79 (AKKSSVPNDNIERARKRGSGEEAG) are disordered.

It belongs to the TACO1 family.

It localises to the cytoplasm. This is Probable transcriptional regulatory protein cu0933 from Corynebacterium urealyticum (strain ATCC 43042 / DSM 7109).